We begin with the raw amino-acid sequence, 191 residues long: Putative glutathione-dependent formaldehyde-activating enzyme (191 aa).

A CENP-V/GFA domain is found at 20–166 (FPGGNLYCLC…FQSLGLQTYD (147 aa)). The Zn(2+) site is built by Cys-27, Cys-29, Cys-48, Cys-50, Cys-53, Cys-95, and Cys-98.

The protein belongs to the Gfa family. It depends on Zn(2+) as a cofactor.

It catalyses the reaction S-(hydroxymethyl)glutathione = glutathione + formaldehyde. It participates in one-carbon metabolism; formaldehyde degradation; formate from formaldehyde (glutathione route): step 1/3. In terms of biological role, catalyzes the condensation of formaldehyde and glutathione to S-hydroxymethylglutathione. In Aspergillus flavus (strain ATCC 200026 / FGSC A1120 / IAM 13836 / NRRL 3357 / JCM 12722 / SRRC 167), this protein is Putative glutathione-dependent formaldehyde-activating enzyme.